Here is a 276-residue protein sequence, read N- to C-terminus: Putative metal-binding protein CT_415 (276 aa).

The N-terminal stretch at 1 to 18 (MRLLFLLLFSLGITCSYG) is a signal peptide. The a divalent metal cation site is built by H59, H121, H185, and D256.

This sequence belongs to the bacterial solute-binding protein 9 family.

It localises to the periplasm. In terms of biological role, part of an ATP-binding cassette (ABC) transport system involved in metal import. Binds a metal with high affinity and specificity and delivers it to the membrane permease for translocation into the cytoplasm. The chain is Putative metal-binding protein CT_415 from Chlamydia trachomatis serovar D (strain ATCC VR-885 / DSM 19411 / UW-3/Cx).